We begin with the raw amino-acid sequence, 2598 residues long: Partially reducing polyketide synthase men1 (2598 aa).

Positions 7 to 435 (SQSIAIVGLS…GSNAHAILDD (429 aa)) constitute a Ketosynthase family 3 (KS3) domain. Catalysis depends on for beta-ketoacyl synthase activity residues Cys181, His316, and His358. Over residues 450–459 (GKSHHHHHQH) the composition is skewed to basic residues. Disordered regions lie at residues 450–490 (GKSH…NGTT) and 537–557 (AEKQ…DPEK). A compositionally biased stretch (low complexity) spans 474–490 (VNGTSEVNGTSGVNGTT). Residues 611 to 915 (YVFTGQGAQW…RGPVTQILQS (305 aa)) enclose the Malonyl-CoA:ACP transacylase (MAT) domain. The N-terminal hotdog fold stretch occupies residues 1008 to 1151 (LGLIGAPMPN…GSVAVEFGAL (144 aa)). Residues 1008 to 1325 (LGLIGAPMPN…CVEMPSASGM (318 aa)) form the PKS/mFAS DH domain. Residues 1009 to 1323 (GLIGAPMPNF…LVCVEMPSAS (315 aa)) form a dehydratase (DH) domain region. Residues 1169-1325 (TISQEVDVFY…CVEMPSASGM (157 aa)) are C-terminal hotdog fold. One can recognise an Enoyl reductase (ER) domain in the interval 1886 to 2197 (GMLNTLCFEI…ARSRQDKIVI (312 aa)). Residues 2222–2399 (TYLIAGGLGG…AATIDLGIVK (178 aa)) form the Ketoreductase (KR) domain. One can recognise a Carrier domain in the interval 2510–2587 (EAARLVSAAV…AFASDLAKKG (78 aa)). Residue Ser2547 is modified to O-(pantetheine 4'-phosphoryl)serine.

Pantetheine 4'-phosphate serves as cofactor.

Its pathway is secondary metabolite biosynthesis. Functionally, partially reducing polyketide synthase; part of the gene cluster that mediates the biosynthesis of menisporopsin A, a bioactive macrocyclic polylactone. The biosynthesis of menisporopsin A is performed by a reducing (man1) and a non-reducing (men2) polyketide synthase that catalyze the formation of each menisporopsin A subunits, while the esterification and cyclolactonization activities are probably peformed by the unusual thioesterase domain of men2. First, a reduced diketide intermediate, 3-hydroxybutyryl-S-ACP is produced by men1 and transferred to men2; this is followed by a second reduced diketide which is further elongated using 3 units of malonyl-coA to form a reduced pentaketide. The cyclization of this intermediate by the PT domain forms the second subunit, 2,4-dihydroxy-6-(2-hydroxy-n-propyl)benzoyl-S-ACP. The TE domain of men2 then esterifies the secondary hydroxyl group on the side chain of the second subunit with the acyl-TE of the first subunit to form the first ester intermediate. This process occurs iteratively to form a linear tetraester intermediate. The final subunit is formed by a similar process, except that an extra malonyl-CoA is required in an additional elongation step to form a reduced hexaketide intermediate, and the carbonyl group next to the secondary hydroxyl group is reduced by a trans-acting ketoreductase. Again, the PT domain catalyzes cyclization to form the largest subunit, 2,4-dihydroxy-6-(2,4-dihydroxy-n-pentyl) benzoyl-S-ACP. Then the linear pentaester intermediate is formed. In this step, if the intermediate transfer rate is slow, intra- molecular cyclization involving the secondary hydroxyl group of the pentaester intermediate may occur to form menisporopsin B. Alternatively, transfer of the pentaester intermediate to the TE domain would allow cyclolactonization to be catalyzed by the TE to form menisporopsin A. The sequence is that of Partially reducing polyketide synthase men1 from Menisporopsis theobromae.